The chain runs to 583 residues: Pyruvate kinase isozyme A, chloroplastic (583 aa).

A chloroplast-targeting transit peptide spans 1–74 (MSQSLHFSPN…NSGVLYNNNN (74 aa)). The segment covering 43-52 (KASTSPSSSS) has biased composition (low complexity). The interval 43 to 75 (KASTSPSSSSDPQVLVADNGTGNSGVLYNNNNK) is disordered. Polar residues predominate over residues 62 to 75 (GTGNSGVLYNNNNK). Arg-134 contributes to the substrate binding site. Residues Asn-136, Asp-168, and Thr-169 each coordinate K(+). Position 136 to 139 (136 to 139 (NMCH)) interacts with ATP. Glu-333 provides a ligand contact to Mg(2+). 3 residues coordinate substrate: Gly-356, Asp-357, and Ser-389. Asp-357 lines the Mg(2+) pocket.

This sequence belongs to the pyruvate kinase family. Oligomer of alpha and beta subunits. Mg(2+) serves as cofactor. Requires K(+) as cofactor.

The protein localises to the plastid. It localises to the chloroplast. It catalyses the reaction pyruvate + ATP = phosphoenolpyruvate + ADP + H(+). It functions in the pathway carbohydrate degradation; glycolysis; pyruvate from D-glyceraldehyde 3-phosphate: step 5/5. In Ricinus communis (Castor bean), this protein is Pyruvate kinase isozyme A, chloroplastic.